The sequence spans 233 residues: EEF1A lysine methyltransferase 2 (233 aa).

The protein belongs to the class I-like SAM-binding methyltransferase superfamily. EFM4 family.

The protein resides in the cytoplasm. It is found in the nucleus. The enzyme catalyses L-lysyl-[protein] + 3 S-adenosyl-L-methionine = N(6),N(6),N(6)-trimethyl-L-lysyl-[protein] + 3 S-adenosyl-L-homocysteine + 3 H(+). In terms of biological role, protein-lysine methyltransferase that selectively catalyzes the trimethylation of EEF1A at 'Lys-318'. This is EEF1A lysine methyltransferase 2 from Danio rerio (Zebrafish).